Consider the following 240-residue polypeptide: Biosynthetic peptidoglycan transglycosylase (240 aa).

The helical transmembrane segment at 15-35 (WMFYLGAVVAIAWLATQAFYF) threads the bilayer.

The protein belongs to the glycosyltransferase 51 family.

The protein resides in the cell inner membrane. It carries out the reaction [GlcNAc-(1-&gt;4)-Mur2Ac(oyl-L-Ala-gamma-D-Glu-L-Lys-D-Ala-D-Ala)](n)-di-trans,octa-cis-undecaprenyl diphosphate + beta-D-GlcNAc-(1-&gt;4)-Mur2Ac(oyl-L-Ala-gamma-D-Glu-L-Lys-D-Ala-D-Ala)-di-trans,octa-cis-undecaprenyl diphosphate = [GlcNAc-(1-&gt;4)-Mur2Ac(oyl-L-Ala-gamma-D-Glu-L-Lys-D-Ala-D-Ala)](n+1)-di-trans,octa-cis-undecaprenyl diphosphate + di-trans,octa-cis-undecaprenyl diphosphate + H(+). The protein operates within cell wall biogenesis; peptidoglycan biosynthesis. In terms of biological role, peptidoglycan polymerase that catalyzes glycan chain elongation from lipid-linked precursors. This chain is Biosynthetic peptidoglycan transglycosylase, found in Paraburkholderia xenovorans (strain LB400).